The following is a 507-amino-acid chain: Cobyric acid synthase (507 aa).

Positions 251–448 (DIDIAVVHLP…LHGLFDSDAF (198 aa)) constitute a GATase cobBQ-type domain. The active-site Nucleophile is the Cys-332. Residue His-440 is part of the active site.

This sequence belongs to the CobB/CobQ family. CobQ subfamily.

The protein operates within cofactor biosynthesis; adenosylcobalamin biosynthesis. Functionally, catalyzes amidations at positions B, D, E, and G on adenosylcobyrinic A,C-diamide. NH(2) groups are provided by glutamine, and one molecule of ATP is hydrogenolyzed for each amidation. The polypeptide is Cobyric acid synthase (Klebsiella pneumoniae subsp. pneumoniae (strain ATCC 700721 / MGH 78578)).